We begin with the raw amino-acid sequence, 450 residues long: NADH-ubiquinone oxidoreductase chain 2 (450 aa).

The next 13 membrane-spanning stretches (helical) occupy residues 25–45 (GTITIMFTTMLFFLSMDIVAM), 58–78 (LTPYNLPLSFLMLSLIVMLLM), 90–110 (SPFYLLLLLTNMMGLLLFPLV), 113–133 (LIALYVVMELQSYSLYLLTGL), 145–165 (LLYFLMGGVASTIMLLASYFV), 186–206 (AFDYFDILLVALLFKMGMAPL), 219–239 (TYITAYISMVAKMSMVSWIFA), 248–268 (VTILFFYISLAMAAYKPLFQV), 272–292 (TMLAYSGMLNFSYILLSMMSY), 295–315 (AFYIYMIQYVLTHLILFLGML), 344–364 (LAFSLILALFSLIGMPPTPGF), 385–405 (AIVVCSVVATYYYANMIKVLF), and 414–436 (NFINPSLAFTMASATSLLFSFFM).

It belongs to the complex I subunit 2 family.

Its subcellular location is the mitochondrion inner membrane. It catalyses the reaction a ubiquinone + NADH + 5 H(+)(in) = a ubiquinol + NAD(+) + 4 H(+)(out). In terms of biological role, core subunit of the mitochondrial membrane respiratory chain NADH dehydrogenase (Complex I) that is believed to belong to the minimal assembly required for catalysis. Complex I functions in the transfer of electrons from NADH to the respiratory chain. The immediate electron acceptor for the enzyme is believed to be ubiquinone. This is NADH-ubiquinone oxidoreductase chain 2 (ND2) from Debaryomyces hansenii (strain ATCC 36239 / CBS 767 / BCRC 21394 / JCM 1990 / NBRC 0083 / IGC 2968) (Yeast).